The sequence spans 705 residues: Probable cyclic nucleotide-gated ion channel 16 (705 aa).

Topologically, residues 1–57 (MSNLHLYTSARFRNFPTTFSLRHHHNDPNNQRRRSIFSKLRDKTLDPGGDLITRWNH) are cytoplasmic. A helical membrane pass occupies residues 58–78 (IFLITCLLALFLDPLYFYLPI). Residues 79–91 (VQAGTACMSIDVR) lie on the Extracellular side of the membrane. The helical transmembrane segment at 92-112 (FGIFVTCFRNLADLSFLIHIL) threads the bilayer. The Cytoplasmic portion of the chain corresponds to 113–147 (LKFKTAFVSKSSRVFGRGELVMDRREIAIRYLKSE). A helical transmembrane segment spans residues 148-168 (FVIDLAATLPLPQIMIWFVIP). At 169 to 180 (NAGEFRYAAHQN) the chain is on the extracellular side. The helical transmembrane segment at 181–201 (HTLSLIVLIQYVPRFLVMLPL) threads the bilayer. Residues 202–222 (NRRIIKATGVAAKTAWSGAAY) lie on the Cytoplasmic side of the membrane. Residues 223-243 (NLILYLLVSHVLGSVWYVLSI) form a helical membrane-spanning segment. Residues 244-353 (QRQHECWRRE…LAASTLSSET (110 aa)) lie on the Extracellular side of the membrane. A helical transmembrane segment spans residues 354–374 (IFSCFICVAGLVFFSHLIGNV). The Cytoplasmic portion of the chain corresponds to 375–705 (QNYLQSTTAR…MFKPEDPGFF (331 aa)). A nucleoside 3',5'-cyclic phosphate contacts are provided by residues 457–580 (FFAQ…HSKK) and E528. Residues 573–588 (FRRLHSKKLQHAFRYY) are calmodulin-binding. Residues 593–622 (RAWGTCFIQAAWRRYMKRKLAMELARQEEE) form the IQ domain. Disordered stretches follow at residues 636–655 (EEDM…SNNQ) and 672–705 (RGVL…PGFF). Over residues 642–655 (SNNNNGDENSSNNQ) the composition is skewed to low complexity.

This sequence belongs to the cyclic nucleotide-gated cation channel (TC 1.A.1.5) family. As to quaternary structure, homotetramer or heterotetramer.

Its subcellular location is the cell membrane. Its function is as follows. Putative cyclic nucleotide-gated ion channel. This chain is Probable cyclic nucleotide-gated ion channel 16 (CNGC16), found in Arabidopsis thaliana (Mouse-ear cress).